Consider the following 567-residue polypeptide: Urease subunit alpha (567 aa).

Positions 129 to 567 (GGVDTHIHFI…LPMAQRYFLF (439 aa)) constitute a Urease domain. Ni(2+)-binding residues include His134, His136, and Lys217. At Lys217 the chain carries N6-carboxylysine. His219 serves as a coordination point for substrate. Ni(2+) contacts are provided by His246 and His272. His320 functions as the Proton donor in the catalytic mechanism. Asp360 contacts Ni(2+).

It belongs to the metallo-dependent hydrolases superfamily. Urease alpha subunit family. Heterotrimer of UreA (gamma), UreB (beta) and UreC (alpha) subunits. Three heterotrimers associate to form the active enzyme. Ni cation serves as cofactor. Post-translationally, carboxylation allows a single lysine to coordinate two nickel ions.

The protein localises to the cytoplasm. The enzyme catalyses urea + 2 H2O + H(+) = hydrogencarbonate + 2 NH4(+). Its pathway is nitrogen metabolism; urea degradation; CO(2) and NH(3) from urea (urease route): step 1/1. This Aliivibrio fischeri (strain MJ11) (Vibrio fischeri) protein is Urease subunit alpha.